Reading from the N-terminus, the 258-residue chain is 5-oxoprolinase subunit A (258 aa).

The protein belongs to the LamB/PxpA family. In terms of assembly, forms a complex composed of PxpA, PxpB and PxpC.

The enzyme catalyses 5-oxo-L-proline + ATP + 2 H2O = L-glutamate + ADP + phosphate + H(+). Functionally, catalyzes the cleavage of 5-oxoproline to form L-glutamate coupled to the hydrolysis of ATP to ADP and inorganic phosphate. In Deinococcus radiodurans (strain ATCC 13939 / DSM 20539 / JCM 16871 / CCUG 27074 / LMG 4051 / NBRC 15346 / NCIMB 9279 / VKM B-1422 / R1), this protein is 5-oxoprolinase subunit A.